Consider the following 1812-residue polypeptide: Putative surface cell antigen sca2 (1812 aa).

Residues 1-17 (MSTCLLTSSFLSTSARA) form the signal peptide. Composition is skewed to polar residues over residues 344 to 357 (FLNN…STGR) and 371 to 382 (MSNQSIHNTGTS). Disordered regions lie at residues 344-382 (FLNN…TGTS), 648-691 (LEQT…QGFS), and 1338-1462 (KQEN…KKDV). Residues 656–685 (PNPPPLPLNGGIPNPPPLPLNGSMPPPPPL) are compositionally biased toward pro residues. Composition is skewed to basic and acidic residues over residues 1349–1367 (STKD…EQSD) and 1382–1393 (SKNDKSSDDKKS). A compositionally biased stretch (acidic residues) spans 1401-1416 (DEDDTGYATDEEELEE). The segment covering 1417–1455 (SNSTTNEELEESNSTTNEELEESNSTTNEELEESNSTTN) has biased composition (low complexity). The Autotransporter domain maps to 1533–1812 (ETSINRGVWI…QGLIKLKVNL (280 aa)).

It is found in the cell outer membrane. The polypeptide is Putative surface cell antigen sca2 (sca2) (Rickettsia sibirica (strain ATCC VR-151 / 246)).